The following is a 274-amino-acid chain: Tryptophan synthase alpha chain (274 aa).

Active-site proton acceptor residues include E49 and D60.

This sequence belongs to the TrpA family. Tetramer of two alpha and two beta chains.

It catalyses the reaction (1S,2R)-1-C-(indol-3-yl)glycerol 3-phosphate + L-serine = D-glyceraldehyde 3-phosphate + L-tryptophan + H2O. It participates in amino-acid biosynthesis; L-tryptophan biosynthesis; L-tryptophan from chorismate: step 5/5. Functionally, the alpha subunit is responsible for the aldol cleavage of indoleglycerol phosphate to indole and glyceraldehyde 3-phosphate. The protein is Tryptophan synthase alpha chain of Zymomonas mobilis subsp. mobilis (strain ATCC 31821 / ZM4 / CP4).